The following is a 63-amino-acid chain: MSDRQTQIPAGGGREDDHDDQVQSAGQVQVNTEGVDDLLDEIDGLLENNAEEFVRSYVQKGGE.

The segment at Met1–Val28 is disordered. Residues Asp19–Tyr57 form an ARC ATPase binding region. Residue Glu63 forms an Isoglutamyl lysine isopeptide (Glu-Lys) (interchain with K-? in acceptor proteins) linkage.

Belongs to the prokaryotic ubiquitin-like protein family. As to quaternary structure, strongly interacts with the proteasome-associated ATPase ARC through a hydrophobic interface; the interacting region of Pup lies in its C-terminal half. There is one Pup binding site per ARC hexamer ring.

The protein operates within protein degradation; proteasomal Pup-dependent pathway. In terms of biological role, protein modifier that is covalently attached to lysine residues of substrate proteins, thereby targeting them for proteasomal degradation. The tagging system is termed pupylation. The sequence is that of Prokaryotic ubiquitin-like protein Pup from Corynebacterium efficiens (strain DSM 44549 / YS-314 / AJ 12310 / JCM 11189 / NBRC 100395).